The chain runs to 369 residues: Olfactory receptor 2T1 (369 aa).

The Extracellular portion of the chain corresponds to 1 to 76 (MWQEYYFLNV…LFNRKETSGL (76 aa)). Residue Asn56 is glycosylated (N-linked (GlcNAc...) asparagine). The chain crosses the membrane as a helical span at residues 77-97 (IFAIISIIFFTALMANGVMIF). Residues 98–107 (LIQTDLRLHT) are Cytoplasmic-facing. A helical membrane pass occupies residues 108–128 (PMYFLLSHLSLIDMMYISTIV). Topologically, residues 129-148 (PKMLVNYLLDQRTISFVGCT) are extracellular. Cysteines 147 and 239 form a disulfide. A helical transmembrane segment spans residues 149 to 169 (AQHFLYLTLVGAEFFLLGLMA). Residues 170 to 191 (YDRYVAICNPLRYPVLMSRRVC) lie on the Cytoplasmic side of the membrane. The chain crosses the membrane as a helical span at residues 192 to 212 (WMIIAGSWFGGSLDGFLLTPI). Topologically, residues 213–247 (TMSFPFCNSREINHFFCEAPAVLKLACADTALYET) are extracellular. The chain crosses the membrane as a helical span at residues 248-268 (VMYVCCVLMLLIPFSVVLASY). The Cytoplasmic portion of the chain corresponds to 269-286 (ARILTTVQCMSSVEGRKK). The chain crosses the membrane as a helical span at residues 287-307 (AFATCSSHMTVVSLFYGAAMY). The Extracellular portion of the chain corresponds to 308 to 321 (TYMLPHSYHKPAQD). A helical transmembrane segment spans residues 322–342 (KVLSVFYTILTPMLNPLIYSL). The Cytoplasmic portion of the chain corresponds to 343–369 (RNKDVTGALKRALGRFKGPQRVSGGVF).

Belongs to the G-protein coupled receptor 1 family.

Its subcellular location is the cell membrane. In terms of biological role, odorant receptor. This Homo sapiens (Human) protein is Olfactory receptor 2T1 (OR2T1).